The chain runs to 191 residues: Glycerol-3-phosphate acyltransferase (191 aa).

A run of 5 helical transmembrane segments spans residues 3 to 23, 51 to 71, 78 to 98, 108 to 128, and 150 to 170; these read YLIV…FILT, TLGY…VLYV, YIFI…WLKF, VGIL…SWAV, and YLIV…VLIF.

It belongs to the PlsY family. In terms of assembly, probably interacts with PlsX.

It is found in the cell inner membrane. It catalyses the reaction an acyl phosphate + sn-glycerol 3-phosphate = a 1-acyl-sn-glycero-3-phosphate + phosphate. It participates in lipid metabolism; phospholipid metabolism. In terms of biological role, catalyzes the transfer of an acyl group from acyl-phosphate (acyl-PO(4)) to glycerol-3-phosphate (G3P) to form lysophosphatidic acid (LPA). This enzyme utilizes acyl-phosphate as fatty acyl donor, but not acyl-CoA or acyl-ACP. This is Glycerol-3-phosphate acyltransferase from Pelagibacter ubique (strain HTCC1062).